The primary structure comprises 63 residues: Large ribosomal subunit protein bL28 (63 aa).

The protein belongs to the bacterial ribosomal protein bL28 family.

This chain is Large ribosomal subunit protein bL28, found in Desulfatibacillum aliphaticivorans.